A 460-amino-acid polypeptide reads, in one-letter code: Mercuric reductase (460 aa).

One can recognise an HMA domain in the interval 1-65; that stretch reads MTHLKITGMT…AVAGLGYKAM (65 aa). A metal cation is bound by residues C11 and C14. FAD-binding residues include A110, G130, and T135. Residues C136 and C141 are joined by a disulfide bond. FAD contacts are provided by K145 and A211. 2 residues coordinate Hg(2+): C457 and C458.

The protein belongs to the class-I pyridine nucleotide-disulfide oxidoreductase family. In terms of assembly, homodimer. FAD serves as cofactor.

The enzyme catalyses Hg + NADP(+) + H(+) = Hg(2+) + NADPH. Resistance to Hg(2+) in bacteria appears to be governed by a specialized system which includes mercuric reductase. MerA protein is responsible for volatilizing mercury as Hg(0). The protein is Mercuric reductase (merA) of Serratia marcescens.